A 352-amino-acid chain; its full sequence is Aromatic amino acid aminotransferase (352 aa).

N6-(pyridoxal phosphate)lysine is present on K217.

It belongs to the class-II pyridoxal-phosphate-dependent aminotransferase family. Homodimer. It depends on pyridoxal 5'-phosphate as a cofactor.

It catalyses the reaction an aromatic L-alpha-amino acid + 2-oxoglutarate = an aromatic oxo-acid + L-glutamate. Functionally, aminotransferase that catalyzes the conversion of aromatic amino acids and 2-oxoglutarate into corresponding aromatic oxo acids and L-glutamate. This Cutibacterium acnes (strain DSM 16379 / KPA171202) (Propionibacterium acnes) protein is Aromatic amino acid aminotransferase.